We begin with the raw amino-acid sequence, 350 residues long: Decarboxylase iboD (350 aa).

This sequence belongs to the phosphatidylserine decarboxylase family.

The protein operates within secondary metabolite biosynthesis. In terms of biological role, decarboxylase; part of the gene cluster that mediates the biosynthesis of the psychoactive metabolites ibotenic acid and muscimol. The first committed step is glutamate hydroxylation by the 2-oxoglutarate-dependent dioxygenase iboH, and the last step is decarboxylation of ibotenic acid to muscimol by the decarboxylase iboD. The order of the intermediate reactions is somewhat ambiguous. IboA likely activates the carboxylic acid at position 5 to introduce an amide bond, and the flavin monooxygenase iboF generates the N-O bond. There are several options for the latter step. One option is that iboF directly hydroxylates the amide nitrogen formed by iboA to produce a hydroxamic acid species. Another option is that iboF hydroxylates an external N-containing compound, whose resulting N-O bond is subsequently introduced into the hydroxyglutamate scaffold. The paralogous PLP-dependent cystathionine gamma-synthase-like enzymes iboG1 and iboG2 are likely involved in substitution of the OH group at position 3 by the O-N moiety. The first cyclic intermediate is most probably tricholomic acid which is likely desaturated to ibotenic acid by the cytochrome P450 monooxygenase iboC. The chain is Decarboxylase iboD from Amanita muscaria (strain Koide BX008).